A 101-amino-acid chain; its full sequence is Small ribosomal subunit protein uS14 (101 aa).

A disordered region spans residues methionine 1–asparagine 22. Residues glutamate 11–asparagine 22 show a composition bias toward basic residues.

The protein belongs to the universal ribosomal protein uS14 family. Part of the 30S ribosomal subunit. Contacts proteins S3 and S10.

Functionally, binds 16S rRNA, required for the assembly of 30S particles and may also be responsible for determining the conformation of the 16S rRNA at the A site. The sequence is that of Small ribosomal subunit protein uS14 from Rickettsia conorii (strain ATCC VR-613 / Malish 7).